A 957-amino-acid polypeptide reads, in one-letter code: AP2-associated protein kinase 1 (957 aa).

Met-1 bears the N-acetylmethionine mark. Residues 1–11 (MKKFFDSRREQ) show a composition bias toward basic and acidic residues. Residues 1–25 (MKKFFDSRREQGGSGLGSGSSGGGG) form a disordered region. Residues 12–25 (GGSGLGSGSSGGGG) are compositionally biased toward gly residues. Position 14 is a phosphoserine (Ser-14). A Protein kinase domain is found at 46–315 (VTVDEVLAEG…QVSYFSFKLL (270 aa)). ATP contacts are provided by residues 52 to 60 (LAEGGFAIV) and Lys-74. Asp-176 acts as the Proton acceptor in catalysis. At Tyr-234 the chain carries Phosphotyrosine. Position 235 is a phosphoserine (Ser-235). 2 disordered regions span residues 326–506 (NSPI…AVHP) and 563–629 (TAAA…AGHR). A phosphothreonine mark is found at Thr-354 and Thr-389. The residue at position 391 (Arg-391) is an Omega-N-methylarginine. A compositionally biased stretch (pro residues) spans 436–448 (PQAPPTSQQPPSA). Thr-441 is modified (phosphothreonine). 2 stretches are compositionally biased toward low complexity: residues 449–506 (PAQA…AVHP) and 563–601 (TAAA…KVQT). Position 602 is a phosphothreonine (Thr-602). A compositionally biased stretch (polar residues) spans 607–617 (IQGQKLGSLTP). Ser-614 bears the Phosphoserine mark. Position 616 is a phosphothreonine (Thr-616). Ser-619, Ser-620, Ser-633, and Ser-646 each carry phosphoserine. Residue Thr-649 is modified to Phosphothreonine. Residues 660 to 697 (SLNKSKSATTTPSGSPRASQQNVYNPSEGSTWNPFDDD) form a disordered region. Residues 668-692 (TTTPSGSPRASQQNVYNPSEGSTWN) show a composition bias toward polar residues. At Tyr-683 the chain carries Phosphotyrosine. A phosphoserine mark is found at Ser-727, Ser-842, Ser-933, and Ser-934. The clathrin-binding domain (CBD) stretch occupies residues 819-956 (EKADVAVESL…SLLLVDQLID (138 aa)). 2 disordered regions span residues 832-855 (LEPP…TDSL) and 919-941 (VLIT…ESSL). The span at 840–855 (LPSQTESVTSNRTDSL) shows a compositional bias: polar residues. Low complexity predominate over residues 927–940 (GGHSRNSSGSSESS).

The protein belongs to the protein kinase superfamily. Ser/Thr protein kinase family. In terms of assembly, interacts (via CBD domain) with clathrin. Interacts with AP-2 complex. Interacts with NUMB. Interacts with alpha-adaptin. Interacts with EPS15 isoform 2. Interacts with membrane-bound activated NOTCH1 but not with the inactive full-length form of NOTCH1. Preferentially interacts with monoubiquitinated activated NOTCH1 compared to the non-ubiquitinated form. In terms of processing, autophosphorylated. Detected in brain (at protein level).

The protein localises to the cell membrane. The protein resides in the membrane. It is found in the clathrin-coated pit. Its subcellular location is the presynapse. The enzyme catalyses L-seryl-[protein] + ATP = O-phospho-L-seryl-[protein] + ADP + H(+). It catalyses the reaction L-threonyl-[protein] + ATP = O-phospho-L-threonyl-[protein] + ADP + H(+). Stimulated by clathrin. Regulates clathrin-mediated endocytosis by phosphorylating the AP2M1/mu2 subunit of the adaptor protein complex 2 (AP-2) which ensures high affinity binding of AP-2 to cargo membrane proteins during the initial stages of endocytosis. Preferentially, may phosphorylate substrates on threonine residues. Regulates phosphorylation of other AP-2 subunits as well as AP-2 localization and AP-2-mediated internalization of ligand complexes. Phosphorylates NUMB and regulates its cellular localization, promoting NUMB localization to endosomes. Binds to and stabilizes the activated form of NOTCH1, increases its localization in endosomes and regulates its transcriptional activity. The sequence is that of AP2-associated protein kinase 1 (AAK1) from Bos taurus (Bovine).